Consider the following 644-residue polypeptide: Exoribonuclease 2 (644 aa).

One can recognise an RNB domain in the interval 189-516 (REDLTSLDFV…NHRLLKAVIK (328 aa)). Residues 561–643 (GTRFAAEIVD…ETRSIIARPV (83 aa)) enclose the S1 motif domain.

This sequence belongs to the RNR ribonuclease family. RNase II subfamily.

Its subcellular location is the cytoplasm. The enzyme catalyses Exonucleolytic cleavage in the 3'- to 5'-direction to yield nucleoside 5'-phosphates.. Involved in mRNA degradation. Hydrolyzes single-stranded polyribonucleotides processively in the 3' to 5' direction. The sequence is that of Exoribonuclease 2 from Shigella flexneri serotype 5b (strain 8401).